Here is a 551-residue protein sequence, read N- to C-terminus: Hydroxylamine reductase (551 aa).

Residues Cys3, Cys6, Cys18, and Cys25 each contribute to the [2Fe-2S] cluster site. Positions 249, 273, 317, 405, 433, 458, 492, and 494 each coordinate hybrid [4Fe-2O-2S] cluster. The residue at position 405 (Cys405) is a Cysteine persulfide.

It belongs to the HCP family. [2Fe-2S] cluster serves as cofactor. It depends on hybrid [4Fe-2O-2S] cluster as a cofactor.

Its subcellular location is the cytoplasm. The catalysed reaction is A + NH4(+) + H2O = hydroxylamine + AH2 + H(+). In terms of biological role, catalyzes the reduction of hydroxylamine to form NH(3) and H(2)O. The chain is Hydroxylamine reductase from Edwardsiella ictaluri (strain 93-146).